A 555-amino-acid chain; its full sequence is Formate--tetrahydrofolate ligase (555 aa).

65-72 provides a ligand contact to ATP; sequence TPAGEGKS.

It belongs to the formate--tetrahydrofolate ligase family.

It catalyses the reaction (6S)-5,6,7,8-tetrahydrofolate + formate + ATP = (6R)-10-formyltetrahydrofolate + ADP + phosphate. Its pathway is one-carbon metabolism; tetrahydrofolate interconversion. The sequence is that of Formate--tetrahydrofolate ligase from Staphylococcus aureus (strain COL).